Consider the following 274-residue polypeptide: Triosephosphate isomerase (274 aa).

31 to 33 contributes to the substrate binding site; that stretch reads NWK. His-118 (electrophile) is an active-site residue. The active-site Proton acceptor is Glu-188. Substrate contacts are provided by residues Gly-194, Ser-234, and 255 to 256; that span reads GG.

Belongs to the triosephosphate isomerase family. Homodimer.

The protein localises to the cytoplasm. It carries out the reaction D-glyceraldehyde 3-phosphate = dihydroxyacetone phosphate. It functions in the pathway carbohydrate biosynthesis; gluconeogenesis. It participates in carbohydrate degradation; glycolysis; D-glyceraldehyde 3-phosphate from glycerone phosphate: step 1/1. Its function is as follows. Involved in the gluconeogenesis. Catalyzes stereospecifically the conversion of dihydroxyacetone phosphate (DHAP) to D-glyceraldehyde-3-phosphate (G3P). The polypeptide is Triosephosphate isomerase (Chlamydia trachomatis serovar A (strain ATCC VR-571B / DSM 19440 / HAR-13)).